A 702-amino-acid chain; its full sequence is Arylphorin subunit alpha (702 aa).

A signal peptide spans 1–16 (MKTVVILAGLVALALS). 2 N-linked (GlcNAc...) asparagine glycosylation sites follow: Asn75 and Asn214.

It belongs to the hemocyanin family. In terms of assembly, arylphorin is a hexamer of subunits alpha and beta. Fat body.

It is found in the secreted. The protein localises to the extracellular space. In terms of biological role, arylphorin is a larval storage protein (LSP) which may serve as a storage protein used primarily as a source of aromatic amino acids for protein synthesis during metamorphosis. It is a constituent of the sclerotizing system of the cuticle, and serves as a carrier for ecdysteroid hormone. In Manduca sexta (Tobacco hawkmoth), this protein is Arylphorin subunit alpha.